Reading from the N-terminus, the 611-residue chain is MAU2 chromatid cohesion factor homolog (611 aa).

TPR repeat units lie at residues 11–46 (YAGL…NPPP), 91–124 (FEAS…TSGE), 131–164 (FRLF…AEQC), 371–404 (PILH…ADNP), and 490–523 (ACSL…SGKI). A disordered region spans residues 581 to 611 (WTGAVSPTKSSTIPPQQSFQTWSQPGPSRLS). Positions 585-611 (VSPTKSSTIPPQQSFQTWSQPGPSRLS) are enriched in polar residues.

This sequence belongs to the SCC4/mau-2 family. Component of the cohesin loading complex.

The protein resides in the nucleus. The protein localises to the nucleoplasm. Its function is as follows. Required for association of the cohesin complex with chromatin during interphase. Plays a role in sister chromatid cohesion and normal progression through prometaphase. This is MAU2 chromatid cohesion factor homolog from Nematostella vectensis (Starlet sea anemone).